The primary structure comprises 179 residues: uncharacterized protein (179 aa).

The signal sequence occupies residues 1 to 19 (MNTNVFRLLLLGSLFSLSA). Cys-20 is lipidated: N-palmitoyl cysteine. Cys-20 is lipidated: S-diacylglycerol cysteine.

It localises to the cell membrane. This is an uncharacterized protein from Escherichia coli (strain K12).